Here is a 439-residue protein sequence, read N- to C-terminus: Cysteine desulfurase-like protein ustD (439 aa).

The tract at residues M1 to G25 is disordered. Pyridoxal 5'-phosphate contacts are provided by residues T120 to T121, N206, and S255 to Y257. K258 bears the N6-(pyridoxal phosphate)lysine mark.

Belongs to the class-V pyridoxal-phosphate-dependent aminotransferase family. The cofactor is pyridoxal 5'-phosphate.

It functions in the pathway mycotoxin biosynthesis. Its function is as follows. Cysteine desulfurase-like protein; part of the gene cluster that mediates the biosynthesis of the secondary metabolite ustiloxin B, an antimitotic tetrapeptide. First, ustA is processed by the subtilisin-like endoprotease Kex2 that is outside the ustiloxin B gene cluster, at the C-terminal side of Arg-Lys, after transfer to Golgi apparatus through the endoplasmic reticulum (ER). Cleavage by KEX2 generates 16 peptides YAIG-I to YAIG-XVI. To process the precursor peptide further, at least two peptidases are necessary to cleave the N-terminal and C-terminal sides of the Tyr-Ala-Ile-Gly core peptide which serves as backbone for the synthesis of ustiloxin B, through cyclization and modification of the tyrosine with a non-protein coding amino acid, norvaline. One of the two peptidases must be the serine peptidase ustP; and the other pepdidase is probably ustH. Macrocyclization of the core peptide derived from ustA requires the tyrosinase ustQ, as well as the homologous oxidases ustYa and ustYb, and leads to the production of the first cyclization product N-desmethylustiloxin F. For the formation of N-desmethylustiloxin F, three oxidation steps are required, hydroxylation at the benzylic position, hydroxylation at either the aromatic ring of Tyr or beta-position of Ile, and oxidative cyclization. UstQ may catalyze the oxidation of a phenol moiety, whereas the ustYa and ustYb are most likely responsible for the remaining two-step oxidations. N-desmethylustiloxin F is then methylated by ustM to yield ustiloxin F which in turn substrate of the cytochrome P450 monooxygenase ustC which catalyzes the formation of S-deoxyustiloxin H. The flavoprotein monooxygenases ustF1 and ustF2 then participate in the modification of the side chain of S-deoxyustiloxin H, leading to the synthesis of an oxime intermediate, via ustiloxin H. Finally, carboxylative dehydration performed by the cysteine desulfurase-like protein ustD yields ustiloxin B. The protein is Cysteine desulfurase-like protein ustD of Aspergillus flavus (strain ATCC 200026 / FGSC A1120 / IAM 13836 / NRRL 3357 / JCM 12722 / SRRC 167).